Reading from the N-terminus, the 132-residue chain is Small ribosomal subunit protein uS8c (132 aa).

The protein belongs to the universal ribosomal protein uS8 family. As to quaternary structure, part of the 30S ribosomal subunit.

It is found in the plastid. Its subcellular location is the chloroplast. One of the primary rRNA binding proteins, it binds directly to 16S rRNA central domain where it helps coordinate assembly of the platform of the 30S subunit. In Acorus calamus (Sweet flag), this protein is Small ribosomal subunit protein uS8c (rps8).